The chain runs to 526 residues: RNA-binding protein FUS (526 aa).

The segment covering 1–14 (MASNDYTQQATQSY) has biased composition (polar residues). Positions 1 to 286 (MASNDYTQQA…SEQDNSDNNT (286 aa)) are disordered. 2 stretches are compositionally biased toward low complexity: residues 17–75 (YPTQ…PQGY) and 83–164 (SSQS…YNSS). Residues Ser26 and Ser30 each carry the phosphoserine modification. Residue Ser42 is modified to Phosphoserine; by ATM. Composition is skewed to gly residues over residues 165 to 177 (SGGGGGGGGGGNY) and 186 to 209 (SGGGSGGGYGNQDQSGGGGSGGYG). Residues Arg216 and Arg218 each carry the asymmetric dimethylarginine; alternate modification. Omega-N-methylarginine; alternate occurs at positions 216 and 218. The span at 217–232 (GRGGSGGGGGGGGGGY) shows a compositional bias: gly residues. Ser221 is modified (phosphoserine). An asymmetric dimethylarginine mark is found at Arg242, Arg244, Arg248, Arg251, and Arg259. A compositionally biased stretch (gly residues) spans 244–259 (RGGGRGGRGGMGGSDR). At Ser277 the chain carries Phosphoserine. In terms of domain architecture, RRM spans 285-371 (NTIFVQGLGE…NPIKVSFATR (87 aa)). At Thr286 the chain carries Phosphothreonine. Residue Lys334 forms a Glycyl lysine isopeptide (Lys-Gly) (interchain with G-Cter in SUMO2) linkage. Ser340 is subject to Phosphoserine. 2 disordered regions span residues 375–424 (FNRG…QRAG) and 444–526 (CNQC…ERPY). An asymmetric dimethylarginine mark is found at Arg377, Arg383, Arg386, Arg388, and Arg394. Gly residues predominate over residues 377–421 (RGGGNGRGGRGRGGPMGRGGYGGGGSGGGGRGGFPSGGGGGGGQQ). Arg407 bears the Asymmetric dimethylarginine; alternate mark. Arg407 carries the post-translational modification Omega-N-methylarginine; alternate. The RanBP2-type zinc-finger motif lies at 422 to 453 (RAGDWKCPNPTCENMNFSWRNECNQCKAPKPD). A compositionally biased stretch (gly residues) spans 454–468 (GPGGGPGGSHMGGNY). Over residues 469-493 (GDDRRGGRGGYDRGGYRGRGGDRGG) the composition is skewed to basic and acidic residues. An asymmetric dimethylarginine mark is found at Arg473, Arg476, Arg481, Arg485, Arg487, Arg491, Arg495, and Arg498. A compositionally biased stretch (gly residues) spans 494–508 (FRGGRGGGDRGGFGP). Arg503 is modified (asymmetric dimethylarginine; alternate). At Arg503 the chain carries Omega-N-methylarginine; alternate. Residues 511–526 (MDSRGEHRQDRRERPY) are compositionally biased toward basic and acidic residues.

This sequence belongs to the RRM TET family. As to quaternary structure, self-oligomerizes (via N-terminal region). Oligomerization is essential for chromatin binding. Component of nuclear riboprotein complexes. Interacts with ILF3, TDRD3 and SF1. Interacts through its C-terminus with SFRS13A. Interacts with OTUB1 and SARNP. Interacts with LRSAM1. Interacts with SAFB1 in a DNA-dependent manner; this interaction tethers FUS to chromatin. Interacts with MATR3. Interacts with SNRNP70 and POLR2A; these interactions couple RNA transcription and splicing. Interacts (through its RNA-binding domain) with RALY (through its RNA-binding domain); both are components of the same RNPs. In terms of processing, arg-216 and Arg-218 are dimethylated, probably to asymmetric dimethylarginine. Post-translationally, phosphorylated in its N-terminal serine residues upon induced DNA damage. ATM and DNA-PK are able to phosphorylate FUS N-terminal region. Ubiquitous.

Its subcellular location is the nucleus. Its function is as follows. DNA/RNA-binding protein that plays a role in various cellular processes such as transcription regulation, RNA splicing, RNA transport, DNA repair and damage response. Binds to ssRNA containing the consensus sequence 5'-AGGUAA-3'. Binds to nascent pre-mRNAs and acts as a molecular mediator between RNA polymerase II and U1 small nuclear ribonucleoprotein thereby coupling transcription and splicing. Also binds its own pre-mRNA and autoregulates its expression; this autoregulation mechanism is mediated by non-sense-mediated decay. Plays a role in DNA repair mechanisms by promoting D-loop formation and homologous recombination during DNA double-strand break repair. In neuronal cells, plays crucial roles in dendritic spine formation and stability, RNA transport, mRNA stability and synaptic homeostasis. In Homo sapiens (Human), this protein is RNA-binding protein FUS (FUS).